Here is a 147-residue protein sequence, read N- to C-terminus: MLYFVGRIYGYEVVNYTNNILIIRKNKGSSVPKQFVGIYELIEEHDEYMKLRREMDLSNALINVKGKIITAKNSTITRASMFNPFDTLIVEKRRNLRGVKKTIVIKKGITAILKQQQNTMIIRIAKSLHNKKPIPLAPDTDWFEIIS.

This is an uncharacterized protein from Acidianus convivator (ATV).